Here is a 146-residue protein sequence, read N- to C-terminus: Snaclec jerdonibitin subunit beta (146 aa).

A signal peptide spans M1–A23. Disulfide bonds link C25–C36, C53–C142, and C119–C134. One can recognise a C-type lectin domain in the interval Y32 to K143.

Belongs to the snaclec family. In terms of assembly, heterodimer of subunits alpha and beta; disulfide-linked. In terms of tissue distribution, expressed by the venom gland.

It localises to the secreted. Functionally, snaclec that dose-dependently inhibits platelet aggregation induced by ristocetin or low-dose thrombin, but not by high-dose thrombin. Binds to GPIbalpha (GP1BA). In vivo, also dose-dependently induces thrombocytopenia of mice and platelet counts remains at very low level even after 18 hours intravenous injection. This Protobothrops jerdonii (Jerdon's pitviper) protein is Snaclec jerdonibitin subunit beta.